The chain runs to 267 residues: Thiazole synthase (267 aa).

Catalysis depends on Lys110, which acts as the Schiff-base intermediate with DXP. Residues Gly171, Ala197–Gly198, and Asn219–Thr220 each bind 1-deoxy-D-xylulose 5-phosphate.

The protein belongs to the ThiG family. In terms of assembly, homotetramer. Forms heterodimers with either ThiH or ThiS.

Its subcellular location is the cytoplasm. The enzyme catalyses [ThiS sulfur-carrier protein]-C-terminal-Gly-aminoethanethioate + 2-iminoacetate + 1-deoxy-D-xylulose 5-phosphate = [ThiS sulfur-carrier protein]-C-terminal Gly-Gly + 2-[(2R,5Z)-2-carboxy-4-methylthiazol-5(2H)-ylidene]ethyl phosphate + 2 H2O + H(+). It participates in cofactor biosynthesis; thiamine diphosphate biosynthesis. Functionally, catalyzes the rearrangement of 1-deoxy-D-xylulose 5-phosphate (DXP) to produce the thiazole phosphate moiety of thiamine. Sulfur is provided by the thiocarboxylate moiety of the carrier protein ThiS. In vitro, sulfur can be provided by H(2)S. This Maricaulis maris (strain MCS10) (Caulobacter maris) protein is Thiazole synthase.